The sequence spans 62 residues: Large ribosomal subunit protein bL28 (62 aa).

The segment at M1–L22 is disordered.

It belongs to the bacterial ribosomal protein bL28 family.

This is Large ribosomal subunit protein bL28 from Staphylococcus aureus (strain N315).